The primary structure comprises 232 residues: Large ribosomal subunit protein uL1 (232 aa).

It belongs to the universal ribosomal protein uL1 family. Part of the 50S ribosomal subunit.

Binds directly to 23S rRNA. The L1 stalk is quite mobile in the ribosome, and is involved in E site tRNA release. Its function is as follows. Protein L1 is also a translational repressor protein, it controls the translation of the L11 operon by binding to its mRNA. The polypeptide is Large ribosomal subunit protein uL1 (Levilactobacillus brevis (strain ATCC 367 / BCRC 12310 / CIP 105137 / JCM 1170 / LMG 11437 / NCIMB 947 / NCTC 947) (Lactobacillus brevis)).